Here is a 198-residue protein sequence, read N- to C-terminus: MASQEIEALSGALARLPGLGPRSARRAVLWLIKRRETALPQLLNALTQVQELLVECGVCGNVDTSNPCGICTDHRRDQRSICVVEEVADLWALDRARLFTGKYHVLGGRLSALEGVRPEDLTIGSLLDRVAQGGIDEVVLAMNATLEGQTTAHYIAERLEGAAVRVTQLAHGLPVGGELDYLDEGTLAQALRARRPVG.

Residues 56 to 71 form a C4-type zinc finger; that stretch reads CGVCGNVDTSNPCGIC. Residues 79–174 form the Toprim domain; it reads RSICVVEEVA…RVTQLAHGLP (96 aa).

It belongs to the RecR family.

Functionally, may play a role in DNA repair. It seems to be involved in an RecBC-independent recombinational process of DNA repair. It may act with RecF and RecO. This Novosphingobium aromaticivorans (strain ATCC 700278 / DSM 12444 / CCUG 56034 / CIP 105152 / NBRC 16084 / F199) protein is Recombination protein RecR.